A 507-amino-acid polypeptide reads, in one-letter code: Cytochrome P450 71A4 (507 aa).

Residues 3–23 traverse the membrane as a helical segment; that stretch reads VPCLWYSLLILLLLFIFLLIH. Residue C448 coordinates heme.

It belongs to the cytochrome P450 family. The cofactor is heme.

The protein localises to the membrane. Functionally, may have a role in maturation, such as during flavor formation or other metabolite production specific to aging tissues. This is Cytochrome P450 71A4 (CYP71A4) from Solanum melongena (Eggplant).